Here is a 640-residue protein sequence, read N- to C-terminus: Threonine--tRNA ligase (640 aa).

The region spanning M1–T61 is the TGS domain. The tract at residues D242–P533 is catalytic. Zn(2+) is bound by residues C333, H384, and H510.

The protein belongs to the class-II aminoacyl-tRNA synthetase family. Homodimer. The cofactor is Zn(2+).

Its subcellular location is the cytoplasm. The enzyme catalyses tRNA(Thr) + L-threonine + ATP = L-threonyl-tRNA(Thr) + AMP + diphosphate + H(+). Its function is as follows. Catalyzes the attachment of threonine to tRNA(Thr) in a two-step reaction: L-threonine is first activated by ATP to form Thr-AMP and then transferred to the acceptor end of tRNA(Thr). Also edits incorrectly charged L-seryl-tRNA(Thr). This chain is Threonine--tRNA ligase, found in Pseudomonas savastanoi pv. phaseolicola (strain 1448A / Race 6) (Pseudomonas syringae pv. phaseolicola (strain 1448A / Race 6)).